The following is a 436-amino-acid chain: Chorion-specific transcription factor GCMa (436 aa).

The GCM DNA-binding region spans 14 to 169; that stretch reads LSWDINDMKL…KLEAEARRAM (156 aa). Zn(2+)-binding residues include cysteine 76, cysteine 82, cysteine 86, cysteine 113, cysteine 116, cysteine 125, histidine 152, and histidine 154.

In terms of processing, polyubiquitinated in the presence of UBE2D2 and FBXW2 (in vitro).

Its subcellular location is the nucleus. Its function is as follows. Transcription factor involved in the control of expression of placental growth factor (PGF) and other placenta-specific genes. Binds to the trophoblast-specific element 2 (TSE2) of the aromatase gene enhancer. Binds to the SYDE1 promoter. Has a central role in mediating the differentiation of trophoblast cells along both the villous and extravillous pathways in placental development. The protein is Chorion-specific transcription factor GCMa (Gcm1) of Rattus norvegicus (Rat).